A 106-amino-acid chain; its full sequence is Insulin-like peptide 04 (106 aa).

A signal peptide spans 1-22 (MPRTFLVVLIYILAGFLCSTSA). Residues 23–37 (LRKVNEASGIKTDGS) constitute a propeptide that is removed on maturation. Intrachain disulfides connect C45-C50, C46-C80, and C59-C68. Positions 86-106 (RRKRSLTVDKREAKKFIRQRR) are cleaved as a propeptide — c peptide.

It belongs to the insulin family.

The protein localises to the secreted. Insulin decreases blood glucose concentration. May have evolved to activate insulin receptors (INSR) in vertebrates. Molecular docking studies reveals unique interaction with the human insulin receptor. In vivo, insulin-like peptide injection reduces blood glucose levels in two models of zebrafish diabetes (streptozotocin- and glucose-induced). Also shorter swimming distance of zebrafish larvae, an effect which is not observed with human insulin. The protein is Insulin-like peptide 04 of Exaiptasia diaphana (Tropical sea anemone).